We begin with the raw amino-acid sequence, 509 residues long: Maturase K (509 aa).

This sequence belongs to the intron maturase 2 family. MatK subfamily.

It is found in the plastid. The protein localises to the chloroplast. Usually encoded in the trnK tRNA gene intron. Probably assists in splicing its own and other chloroplast group II introns. This chain is Maturase K, found in Chamaecyparis obtusa (Hinoki false-cypress).